Consider the following 316-residue polypeptide: MNTSITARELFDQQRDKLALRWVAGPKGEHREIQANSNNARRPSLAGYLNVIYPNKVQILGTEELAWLDSLDARQRWETIEKIIQVQPLALAISKNQSCPEDLRAAADESNTPLWISSKRGHELLNHLSYHLARTLAPRVTLHGVFMEIYSIGVLITGEAGSGKSELALELLSRGHRLVADDAPEFTQIAPDVLDGTCPELLQDLLEVRGLGVLNVRDMFGDTAVKKNKYLRLIVHLTRPMTEPTPSGYERLTGDSGSRHVLDLDVPLITLPVMPGRNLAVLTEAATRLHILRTKGIDPAAMFIARHSNLLERRTP.

Residues His143 and Lys164 contribute to the active site. ATP is bound at residue Gly158–Ser165. Residue Ser165 coordinates Mg(2+). The Proton acceptor; for phosphorylation activity. Proton donor; for dephosphorylation activity role is filled by Asp182. Residues Leu206–Asn215 are important for the catalytic mechanism of both phosphorylation and dephosphorylation. Glu207 serves as a coordination point for Mg(2+). Residue Arg251 is part of the active site. The interval Pro272–Arg277 is important for the catalytic mechanism of dephosphorylation.

Belongs to the HPrK/P family. As to quaternary structure, homohexamer. Requires Mg(2+) as cofactor.

It carries out the reaction [HPr protein]-L-serine + ATP = [HPr protein]-O-phospho-L-serine + ADP + H(+). The enzyme catalyses [HPr protein]-O-phospho-L-serine + phosphate + H(+) = [HPr protein]-L-serine + diphosphate. Its function is as follows. Catalyzes the ATP- as well as the pyrophosphate-dependent phosphorylation of a specific serine residue in HPr, a phosphocarrier protein of the phosphoenolpyruvate-dependent sugar phosphotransferase system (PTS). HprK/P also catalyzes the pyrophosphate-producing, inorganic phosphate-dependent dephosphorylation (phosphorolysis) of seryl-phosphorylated HPr (P-Ser-HPr). In Xanthomonas axonopodis pv. citri (strain 306), this protein is HPr kinase/phosphorylase.